Here is a 92-residue protein sequence, read N- to C-terminus: Small ribosomal subunit protein uS19 (92 aa).

It belongs to the universal ribosomal protein uS19 family.

In terms of biological role, protein S19 forms a complex with S13 that binds strongly to the 16S ribosomal RNA. This is Small ribosomal subunit protein uS19 from Rhodospirillum centenum (strain ATCC 51521 / SW).